The primary structure comprises 440 residues: Probable exopolygalacturonase B (440 aa).

Positions 1–20 are cleaved as a signal peptide; it reads MRLHFLPLVALCATTASSLA. Asparagine 65, asparagine 190, and asparagine 230 each carry an N-linked (GlcNAc...) asparagine glycan. The Proton donor role is filled by aspartate 260. Residues cysteine 262 and cysteine 279 are joined by a disulfide bond. 2 N-linked (GlcNAc...) asparagine glycosylation sites follow: asparagine 268 and asparagine 280. Residue histidine 283 is part of the active site. Residues asparagine 307, asparagine 334, and asparagine 371 are each glycosylated (N-linked (GlcNAc...) asparagine). Cysteine 397 and cysteine 403 are oxidised to a cystine. Asparagine 412 is a glycosylation site (N-linked (GlcNAc...) asparagine).

It belongs to the glycosyl hydrolase 28 family.

Its subcellular location is the secreted. It carries out the reaction [(1-&gt;4)-alpha-D-galacturonosyl](n) + H2O = alpha-D-galacturonate + [(1-&gt;4)-alpha-D-galacturonosyl](n-1). Functionally, specific in hydrolyzing the terminal glycosidic bond of polygalacturonic acid and oligogalacturonates. The chain is Probable exopolygalacturonase B (pgxB) from Emericella nidulans (strain FGSC A4 / ATCC 38163 / CBS 112.46 / NRRL 194 / M139) (Aspergillus nidulans).